Here is a 96-residue protein sequence, read N- to C-terminus: Protein Vpr (96 aa).

Residues 1–42 (MEQAPEDQGPQREPNNEWTLEILEELKREAVRHFPRPWLHNL) form a homooligomerization region. Residues serine 79, serine 94, and serine 96 each carry the phosphoserine; by host modification.

It belongs to the HIV-1 VPR protein family. In terms of assembly, homooligomer, may form homodimer. Interacts with p6-gag region of the Pr55 Gag precursor protein through a (Leu-X-X)4 motif near the C-terminus of the P6gag protein. Interacts with host UNG. May interact with host RAD23A/HHR23A. Interacts with host VPRBP/DCAF1, leading to hijack the CUL4A-RBX1-DDB1-DCAF1/VPRBP complex, mediating ubiquitination of host proteins such as TERT and ZGPAT and arrest of the cell cycle in G2 phase. In terms of processing, phosphorylated on several residues by host. These phosphorylations regulate VPR activity for the nuclear import of the HIV-1 pre-integration complex.

The protein localises to the virion. It localises to the host nucleus. The protein resides in the host extracellular space. Functionally, during virus replication, may deplete host UNG protein, and incude G2-M cell cycle arrest. Acts by targeting specific host proteins for degradation by the 26S proteasome, through association with the cellular CUL4A-DDB1 E3 ligase complex by direct interaction with host VPRPB/DCAF-1. Cell cycle arrest reportedly occurs within hours of infection and is not blocked by antiviral agents, suggesting that it is initiated by the VPR carried into the virion. Additionally, VPR induces apoptosis in a cell cycle dependent manner suggesting that these two effects are mechanistically linked. Detected in the serum and cerebrospinal fluid of AIDS patient, VPR may also induce cell death to bystander cells. In terms of biological role, during virus entry, plays a role in the transport of the viral pre-integration (PIC) complex to the host nucleus. This function is crucial for viral infection of non-dividing macrophages. May act directly at the nuclear pore complex, by binding nucleoporins phenylalanine-glycine (FG)-repeat regions. This is Protein Vpr from Human immunodeficiency virus type 1 group M subtype K (isolate 96CM-MP535) (HIV-1).